Consider the following 357-residue polypeptide: DNA replication and repair protein RecF (357 aa).

Position 30–37 (Gly30–Thr37) interacts with ATP.

The protein belongs to the RecF family.

It localises to the cytoplasm. Functionally, the RecF protein is involved in DNA metabolism; it is required for DNA replication and normal SOS inducibility. RecF binds preferentially to single-stranded, linear DNA. It also seems to bind ATP. This Salmonella arizonae (strain ATCC BAA-731 / CDC346-86 / RSK2980) protein is DNA replication and repair protein RecF.